The primary structure comprises 311 residues: Dehydrogenase/reductase SDR family member 7C (311 aa).

A signal peptide spans 1–18; the sequence is MGFLTFLIVPLLILGISG. 41 to 65 serves as a coordination point for NAD(+); it reads VITDAISGLGKECSRVFHSAGARLV. A substrate-binding site is contributed by T178. Y191 (proton acceptor) is an active-site residue.

It belongs to the short-chain dehydrogenases/reductases (SDR) family.

It localises to the secreted. Putative oxidoreductase. In Xenopus tropicalis (Western clawed frog), this protein is Dehydrogenase/reductase SDR family member 7C (dhrs7c).